Consider the following 601-residue polypeptide: Glutathione-regulated potassium-efflux system protein KefB (601 aa).

13 helical membrane-spanning segments follow: residues 4–24 (SDFL…VPLA), 29–49 (IGAV…GLGF), 55–75 (EILH…GLEL), 87–107 (IFGV…GLLM), 115–135 (AAVV…LQLM), 152–172 (VLLF…LLAG), 177–197 (HFDW…LIGG), 207–227 (FIAA…LVLG), 230–250 (LFMD…GVLL), 268–288 (GLLL…GVLY), 291–311 (LLWV…VLYL), 324–344 (MQFA…FSTA), and 356–376 (ALLL…MKLV). In terms of domain architecture, RCK N-terminal spans 400-519 (KPQVIVVGFG…AGVTQFSRET (120 aa)).

The protein belongs to the monovalent cation:proton antiporter 2 (CPA2) transporter (TC 2.A.37) family. KefB subfamily. Interacts with the regulatory subunit KefG.

The protein resides in the cell inner membrane. Its function is as follows. Pore-forming subunit of a potassium efflux system that confers protection against electrophiles. Catalyzes K(+)/H(+) antiport. The sequence is that of Glutathione-regulated potassium-efflux system protein KefB from Escherichia coli O81 (strain ED1a).